Reading from the N-terminus, the 374-residue chain is DNA replication and repair protein RecF (374 aa).

Residue 30–37 (GPNAQGKT) participates in ATP binding.

This sequence belongs to the RecF family.

Its subcellular location is the cytoplasm. Functionally, the RecF protein is involved in DNA metabolism; it is required for DNA replication and normal SOS inducibility. RecF binds preferentially to single-stranded, linear DNA. It also seems to bind ATP. This Lactobacillus johnsonii (strain CNCM I-12250 / La1 / NCC 533) protein is DNA replication and repair protein RecF.